Here is a 299-residue protein sequence, read N- to C-terminus: Coenzyme PQQ synthesis protein B (299 aa).

The protein belongs to the PqqB family.

It functions in the pathway cofactor biosynthesis; pyrroloquinoline quinone biosynthesis. In terms of biological role, may be involved in the transport of PQQ or its precursor to the periplasm. This chain is Coenzyme PQQ synthesis protein B, found in Xanthomonas euvesicatoria pv. vesicatoria (strain 85-10) (Xanthomonas campestris pv. vesicatoria).